The sequence spans 873 residues: Leucine--tRNA ligase (873 aa).

Residues 48-58 (PYPSGKLHMGH) carry the 'HIGH' region motif. The 'KMSKS' region motif lies at 636–640 (KMSKS). Lys-639 is an ATP binding site.

The protein belongs to the class-I aminoacyl-tRNA synthetase family.

It localises to the cytoplasm. It carries out the reaction tRNA(Leu) + L-leucine + ATP = L-leucyl-tRNA(Leu) + AMP + diphosphate. This chain is Leucine--tRNA ligase, found in Cupriavidus pinatubonensis (strain JMP 134 / LMG 1197) (Cupriavidus necator (strain JMP 134)).